The primary structure comprises 320 residues: Aspartate carbamoyltransferase catalytic subunit (320 aa).

Carbamoyl phosphate-binding residues include arginine 58 and threonine 59. Lysine 86 lines the L-aspartate pocket. Residues arginine 108, histidine 136, and glutamine 139 each coordinate carbamoyl phosphate. L-aspartate is bound by residues arginine 169 and arginine 223. Glycine 264 and proline 265 together coordinate carbamoyl phosphate.

It belongs to the aspartate/ornithine carbamoyltransferase superfamily. ATCase family. In terms of assembly, heterododecamer (2C3:3R2) of six catalytic PyrB chains organized as two trimers (C3), and six regulatory PyrI chains organized as three dimers (R2).

The catalysed reaction is carbamoyl phosphate + L-aspartate = N-carbamoyl-L-aspartate + phosphate + H(+). It participates in pyrimidine metabolism; UMP biosynthesis via de novo pathway; (S)-dihydroorotate from bicarbonate: step 2/3. In terms of biological role, catalyzes the condensation of carbamoyl phosphate and aspartate to form carbamoyl aspartate and inorganic phosphate, the committed step in the de novo pyrimidine nucleotide biosynthesis pathway. The polypeptide is Aspartate carbamoyltransferase catalytic subunit (Cereibacter sphaeroides (strain ATCC 17025 / ATH 2.4.3) (Rhodobacter sphaeroides)).